We begin with the raw amino-acid sequence, 224 residues long: Adenylate kinase (224 aa).

Residue 10 to 15 participates in ATP binding; sequence GSGKST. The tract at residues 30 to 59 is NMP; it reads SSGDLIRGEIERKSSLGLEMAAYLSRGDLI. Residues Ser-31, Arg-36, 57-59, 83-86, and Gln-90 each bind AMP; these read DLI and GYPR. An LID region spans residues 124-161; it reads GRRICPNCGAVYHITYNPPKVPGICDVCGTKLIQRTDD. Arg-125 is an ATP binding site. Zn(2+) contacts are provided by Cys-128 and Cys-131. An ATP-binding site is contributed by 134-135; it reads VY. Positions 148 and 151 each coordinate Zn(2+). Positions 158 and 169 each coordinate AMP. Gly-197 lines the ATP pocket.

The protein belongs to the adenylate kinase family. Monomer.

It localises to the cytoplasm. It catalyses the reaction AMP + ATP = 2 ADP. It participates in purine metabolism; AMP biosynthesis via salvage pathway; AMP from ADP: step 1/1. Functionally, catalyzes the reversible transfer of the terminal phosphate group between ATP and AMP. Plays an important role in cellular energy homeostasis and in adenine nucleotide metabolism. In Thermococcus gammatolerans (strain DSM 15229 / JCM 11827 / EJ3), this protein is Adenylate kinase.